The chain runs to 326 residues: Histone-lysine N-methyltransferase Suv4-20 (326 aa).

One can recognise an SET domain in the interval 163–273 (QECTRYSLEG…AGDEITCFYG (111 aa)). Residues 294-313 (RGKFSTSDEEENDEPSALSE) form a disordered region.

The protein belongs to the class V-like SAM-binding methyltransferase superfamily. Histone-lysine methyltransferase family. Suvar4-20 subfamily.

It is found in the nucleus. The protein localises to the chromosome. The enzyme catalyses N(6)-methyl-L-lysyl(20)-[histone H4] + S-adenosyl-L-methionine = N(6),N(6)-dimethyl-L-lysyl(20)-[histone H4] + S-adenosyl-L-homocysteine + H(+). It carries out the reaction N(6),N(6)-dimethyl-L-lysyl(20)-[histone H4] + S-adenosyl-L-methionine = N(6),N(6),N(6)-trimethyl-L-lysyl(20)-[histone H4] + S-adenosyl-L-homocysteine + H(+). Histone methyltransferase that specifically di- and trimethylates 'Lys-20' of histone H4 (H4K20me2/me3). H4 'Lys-20' trimethylation represents a specific tag for epigenetic transcriptional repression. Contributes to dosage compensation of X chromosome-relative to autosome-linked gene expression, possibly by converting H4K20me1 to H4K20m2/me3 on autosomes. Involved in the regulation of growth and body fat metabolism downstream of the TOR complex 2 pathway. The sequence is that of Histone-lysine N-methyltransferase Suv4-20 from Caenorhabditis briggsae.